The following is a 77-amino-acid chain: Acyl carrier protein (77 aa).

Positions 2–77 (SSIEKRVKEI…DAIDYITEHT (76 aa)) constitute a Carrier domain. At Ser37 the chain carries O-(pantetheine 4'-phosphoryl)serine.

This sequence belongs to the acyl carrier protein (ACP) family. Post-translationally, 4'-phosphopantetheine is transferred from CoA to a specific serine of apo-ACP by AcpS. This modification is essential for activity because fatty acids are bound in thioester linkage to the sulfhydryl of the prosthetic group.

Its subcellular location is the cytoplasm. It functions in the pathway lipid metabolism; fatty acid biosynthesis. In terms of biological role, carrier of the growing fatty acid chain in fatty acid biosynthesis. In Geobacter sulfurreducens (strain ATCC 51573 / DSM 12127 / PCA), this protein is Acyl carrier protein.